The primary structure comprises 237 residues: Large ribosomal subunit protein uL2 (237 aa).

Polar residues predominate over residues 1 to 11 (MGKRIISQNRG). 2 disordered regions span residues 1–20 (MGKR…YRAP) and 201–237 (FGGG…GVRR).

This sequence belongs to the universal ribosomal protein uL2 family. In terms of assembly, part of the 50S ribosomal subunit. Forms a bridge to the 30S subunit in the 70S ribosome.

In terms of biological role, one of the primary rRNA binding proteins. Required for association of the 30S and 50S subunits to form the 70S ribosome, for tRNA binding and peptide bond formation. It has been suggested to have peptidyltransferase activity; this is somewhat controversial. Makes several contacts with the 16S rRNA in the 70S ribosome. The polypeptide is Large ribosomal subunit protein uL2 (Archaeoglobus fulgidus (strain ATCC 49558 / DSM 4304 / JCM 9628 / NBRC 100126 / VC-16)).